We begin with the raw amino-acid sequence, 283 residues long: Protoheme IX farnesyltransferase (283 aa).

The next 7 membrane-spanning stretches (helical) occupy residues 13-33, 35-55, 90-110, 156-176, 208-228, 230-250, and 262-282; these read ISSVVTLSAFAGFLIGSPTGL, GGTLLWTMLGTALCAGGVGTL, ILLVCLAVGLLCPLVNVLTAV, LGAGGWATFGILATWQMPHFL, MIGFAALLVPVSVLPVLTEAA, WIYGVGVVPLGLWFLWTTIVF, and VLKASVLYIPGLVALLLVDWF.

This sequence belongs to the UbiA prenyltransferase family. Protoheme IX farnesyltransferase subfamily.

It localises to the cell inner membrane. The enzyme catalyses heme b + (2E,6E)-farnesyl diphosphate + H2O = Fe(II)-heme o + diphosphate. The protein operates within porphyrin-containing compound metabolism; heme O biosynthesis; heme O from protoheme: step 1/1. Its function is as follows. Converts heme B (protoheme IX) to heme O by substitution of the vinyl group on carbon 2 of heme B porphyrin ring with a hydroxyethyl farnesyl side group. In Salinibacter ruber (strain DSM 13855 / M31), this protein is Protoheme IX farnesyltransferase.